A 1170-amino-acid chain; its full sequence is RNA-binding protein 33 (1170 aa).

Disordered stretches follow at residues 1–152 (MAAA…EGHE) and 199–221 (KDIKEESDEEEEDDEESGRLRFK). N-acetylalanine is present on A2. The span at 20–36 (QFDKPGAERSWRRRAAD) shows a compositional bias: basic and acidic residues. The segment covering 37–49 (EDWDSELEDDLLG) has biased composition (acidic residues). S41 bears the Phosphoserine mark. Residues 82–108 (FSSQGVTISLNATSGMVTSFELSDNTN) are compositionally biased toward polar residues. Acidic residues-rich tracts occupy residues 112–126 (GEQESEYEQEQGEDE) and 203–214 (EESDEEEEDDEE). A phosphoserine mark is found at S205 and S233. 4 disordered regions span residues 259 to 708 (FEER…NSNL), 721 to 784 (MSSS…PDED), 833 to 863 (QLYAPPPPAEQEEQALSPSPTNGNPLLPFPG), and 942 to 1050 (AVPQ…VPPG). Residues 267–278 (KQGRYSSRRGGR) are compositionally biased toward basic residues. Basic and acidic residues predominate over residues 289 to 306 (GDQRRESTERGRMKDHRP). Pro residues predominate over residues 311–329 (TQPPVVPQAPPPPPPPPQQ). Low complexity-rich tracts occupy residues 335-348 (LFQPQPLQPLLPVQ), 357-372 (QGMHMPPQLETPRMMM), and 394-403 (TVVTPVQVPL). A compositionally biased stretch (pro residues) spans 419–433 (FPGPPEFPQHTPGPV). R470 carries the post-translational modification Asymmetric dimethylarginine. 3 stretches are compositionally biased toward pro residues: residues 481-490 (SPPPPPPPPT), 554-568 (FIPPRQPFLPGPGQP), and 582-630 (LHPP…PQHP). The segment covering 632–642 (QHQHHHHHHHL) has biased composition (basic residues). Polar residues-rich tracts occupy residues 662-708 (QTAQ…NSNL) and 721-732 (MSSSRCSATPSA). A phosphoserine mark is found at S741 and S765. Residues 789-835 (LYRLKIEEQKRLREEILKQKELRRQQQAGARKKELLERLAQQQQQLY) are a coiled coil. At S951 the chain carries Phosphoserine. K960 participates in a covalent cross-link: Glycyl lysine isopeptide (Lys-Gly) (interchain with G-Cter in SUMO2). Phosphoserine is present on residues S973 and S991. R1028 bears the Asymmetric dimethylarginine; alternate mark. Residue R1028 is modified to Omega-N-methylarginine; alternate. An RRM domain is found at 1098–1170 (CVVSVEGLSS…SHINVALIVE (73 aa)).

Associates with the NXF1-NXT1 RNA export complex. Interacts with ALKBH5; facilitating ALKBH5 recruitment to m6A-containing transcripts. Interacts with SENP1; promoting ALKBH5 deSUMOylation and subsequent activation.

The protein localises to the nucleus. The protein resides in the cytoplasm. Functionally, RNA reader protein, which recognizes and binds specific RNAs, thereby regulating RNA metabolic processes, such as mRNA export, mRNA stability and/or translation. Binds a subset of intronless RNAs containing GC-rich elements, such as NORAD, and promotes their nuclear export by recruiting target RNAs to components of the NXF1-NXT1 RNA export machinery. Specifically recognizes and binds N6-methyladenosine (m6A)-containing mRNAs, promoting their demethylation by ALKBH5. Acts as an molecular adapter, which (1) promotes ALKBH5 recruitment to m6A-containing transcripts and (2) activates ALKBH5 demethylase activity by recruiting SENP1, leading to ALKBH5 deSUMOylation and subsequent activation. This chain is RNA-binding protein 33, found in Homo sapiens (Human).